The sequence spans 161 residues: Heme transporter hrg-6 (161 aa).

Helical transmembrane passes span 13 to 33 (IAYTICGIIIGLFWACVYIFA), 38 to 58 (VALAACLTATAFAFETFYFYL), 75 to 95 (VLFWINLIVGFLSIGGMITAI), and 115 to 135 (WWSTATWFLVMLKWTWQNAFI).

Belongs to the HRG family.

The protein localises to the membrane. Functionally, heme transporter. The polypeptide is Heme transporter hrg-6 (hrg-6) (Caenorhabditis elegans).